A 284-amino-acid polypeptide reads, in one-letter code: 2-dehydro-3-deoxyphosphooctonate aldolase (284 aa).

It belongs to the KdsA family.

The protein resides in the cytoplasm. The enzyme catalyses D-arabinose 5-phosphate + phosphoenolpyruvate + H2O = 3-deoxy-alpha-D-manno-2-octulosonate-8-phosphate + phosphate. It functions in the pathway carbohydrate biosynthesis; 3-deoxy-D-manno-octulosonate biosynthesis; 3-deoxy-D-manno-octulosonate from D-ribulose 5-phosphate: step 2/3. It participates in bacterial outer membrane biogenesis; lipopolysaccharide biosynthesis. This is 2-dehydro-3-deoxyphosphooctonate aldolase from Sodalis glossinidius (strain morsitans).